Here is a 237-residue protein sequence, read N- to C-terminus: (5-formylfuran-3-yl)methyl phosphate synthase (237 aa).

Residue Lys27 is the Schiff-base intermediate with substrate of the active site. Lys85 (proton acceptor) is an active-site residue.

It belongs to the MfnB family.

The catalysed reaction is 2 D-glyceraldehyde 3-phosphate = 4-(hydroxymethyl)-2-furancarboxaldehyde phosphate + phosphate + 2 H2O. The protein operates within cofactor biosynthesis; methanofuran biosynthesis. Catalyzes the formation of 4-(hydroxymethyl)-2-furancarboxaldehyde phosphate (4-HFC-P) from two molecules of glyceraldehyde-3-P (GA-3-P). The chain is (5-formylfuran-3-yl)methyl phosphate synthase from Methanobrevibacter smithii (strain ATCC 35061 / DSM 861 / OCM 144 / PS).